Here is a 292-residue protein sequence, read N- to C-terminus: MKPPQRGRGGGVRGGRGLARGGEGSAVRGSGRGGESGRGRGPGRVKSESDGGIKGGSKVLVTPHRHAGVFVAKSKADALVTKNLVPGEIIYNEKRIFVQNEDRSTVEYRVWNPHRSKLADAITTGVDNIWIKPGVKVLYLGASSGYTVSHVSDIVGPEGCVYAVEHSDICGKVLMNMAEKRTNVIPIIEDARHPAKYRMLVGMVDIIFSDVNHPEQANILSLNASYFLKSGGHFMISIKANSIDSTIAAETVYQMEVEKLQMEELRPTEILHLDSCEEKHACVFGGYRLPRK.

The interval Met1–Lys58 is disordered. Gly residues predominate over residues Gly7–Pro42. S-adenosyl-L-methionine-binding positions include Tyr146 to Thr147, Glu165 to His166, Asp190 to Ala191, and Asp210 to His213.

Belongs to the methyltransferase superfamily. Fibrillarin family. As to quaternary structure, component of box C/D small nucleolar ribonucleoprotein (snoRNP) particles. Not detectable by RT-PCR.

Its subcellular location is the nucleus. It localises to the nucleolus. The enzyme catalyses L-glutaminyl-[histone H2A] + S-adenosyl-L-methionine = N(5)-methyl-L-glutaminyl-[histone H2A] + S-adenosyl-L-homocysteine + H(+). Functionally, S-adenosyl-L-methionine-dependent methyltransferase that has the ability to methylate both RNAs and proteins. Involved in pre-rRNA processing. Utilizes the methyl donor S-adenosyl-L-methionine to catalyze the site-specific 2'-hydroxyl methylation of ribose moieties in pre-ribosomal RNA. Site specificity is provided by a guide RNA that base pairs with the substrate. Methylation occurs at a characteristic distance from the sequence involved in base pairing with the guide RNA. Also acts as a protein methyltransferase by mediating methylation of 'Gln-105' of histone H2A (H2AQ105me), a modification that impairs binding of the FACT complex and is specifically present at 35S ribosomal DNA locus. This chain is Putative rRNA 2'-O-methyltransferase fibrillarin 3 (FIB3), found in Arabidopsis thaliana (Mouse-ear cress).